A 617-amino-acid polypeptide reads, in one-letter code: Solute carrier family 2, facilitated glucose transporter member 12 (617 aa).

Residues 1–29 (MVPVENTEGPSLLNQKGTAVETEGSGSRH) are disordered. Topologically, residues 1–44 (MVPVENTEGPSLLNQKGTAVETEGSGSRHPPWARGCGMFTFLSS) are cytoplasmic. Residues 8–17 (EGPSLLNQKG) show a composition bias toward polar residues. The chain crosses the membrane as a helical span at residues 45-65 (VTAAVSGLLVGYELGIISGAL). At 66 to 80 (LQIKTLLALSCHEQE) the chain is on the extracellular side. Residues 81–101 (MVVSSLVIGALLASLTGGVLI) form a helical membrane-spanning segment. Topologically, residues 102–115 (DRYGRRTAIILSSC) are cytoplasmic. A helical membrane pass occupies residues 116-136 (LLGLGSLVLILSLSYTVLIVG). Position 137 (Arg137) is a topological domain, extracellular. A helical membrane pass occupies residues 138–158 (IAIGVSISLSSIATCVYIAEI). At 159-172 (APQHRRGLLVSLNE) the chain is on the cytoplasmic side. The chain crosses the membrane as a helical span at residues 173 to 193 (LMIVIGILSAYISNYAFANVF). The Extracellular portion of the chain corresponds to 194–197 (HGWK). Residues 198 to 218 (YMFGLVIPLGVLQAIAMYFLP) traverse the membrane as a helical segment. At 219 to 278 (PSPRFLVMKGQEGAASKVLGRLRALSDTTEELTVIKSSLKDEYQYSFWDLFRSKDNMRTR) the chain is on the cytoplasmic side. A helical transmembrane segment spans residues 279-299 (IMIGLTLVFFVQITGQPNILF). The Extracellular portion of the chain corresponds to 300–317 (YASTVLKSVGFQSNEAAS). Residues 318 to 338 (LASTGVGVVKVISTIPATLLV) form a helical membrane-spanning segment. Over 339 to 345 (DHVGSKT) the chain is Cytoplasmic. Residues 346–366 (FLCIGSSVMAASLVTMGIVNL) traverse the membrane as a helical segment. The Extracellular segment spans residues 367–466 (NIHMNFTHIC…PAFLKWLSLA (100 aa)). Asn371, Asn383, Asn396, and Asn401 each carry an N-linked (GlcNAc...) asparagine glycan. A helical transmembrane segment spans residues 467-487 (SLLVYVAAFSIGLGPMPWLVL). At 488–498 (SEIFPGGIRGR) the chain is on the cytoplasmic side. Residues 499–519 (AMALTSSMNWGINLLISLTFL) form a helical membrane-spanning segment. Over 520 to 528 (TVTDLIGLP) the chain is Extracellular. Residues 529–549 (WVCFIYTIMSLASLLFVVMFI) traverse the membrane as a helical segment. At 550–617 (PETKGCSLEQ…GQSRQLSPET (68 aa)) the chain is on the cytoplasmic side.

It belongs to the major facilitator superfamily. Sugar transporter (TC 2.A.1.1) family. Glucose transporter subfamily. In terms of tissue distribution, predominantly expressed in skeletal muscle, heart and prostate, with lower levels in brain, placenta and kidney.

The protein localises to the cell membrane. It localises to the endomembrane system. The protein resides in the cytoplasm. Its subcellular location is the perinuclear region. It catalyses the reaction D-glucose(out) = D-glucose(in). Its function is as follows. Insulin-independent facilitative glucose transporter. The protein is Solute carrier family 2, facilitated glucose transporter member 12 of Homo sapiens (Human).